The chain runs to 217 residues: 3-demethoxyubiquinol 3-hydroxylase (217 aa).

6 residues coordinate Fe cation: Glu66, Glu96, His99, Glu148, Glu180, and His183.

Belongs to the COQ7 family. Requires Fe cation as cofactor.

The protein resides in the cell membrane. The enzyme catalyses a 5-methoxy-2-methyl-3-(all-trans-polyprenyl)benzene-1,4-diol + AH2 + O2 = a 3-demethylubiquinol + A + H2O. The protein operates within cofactor biosynthesis; ubiquinone biosynthesis. Its function is as follows. Catalyzes the hydroxylation of 2-nonaprenyl-3-methyl-6-methoxy-1,4-benzoquinol during ubiquinone biosynthesis. In Ralstonia pickettii (strain 12J), this protein is 3-demethoxyubiquinol 3-hydroxylase.